Reading from the N-terminus, the 264-residue chain is Type III pantothenate kinase (264 aa).

6–13 (DVRNTSIE) is an ATP binding site. A substrate-binding site is contributed by 109-112 (GADR). Asp-111 acts as the Proton acceptor in catalysis. Residue Asp-131 coordinates K(+). Thr-134 serves as a coordination point for ATP. Residue Thr-185 participates in substrate binding.

The protein belongs to the type III pantothenate kinase family. In terms of assembly, homodimer. Requires NH4(+) as cofactor. It depends on K(+) as a cofactor.

The protein resides in the cytoplasm. The enzyme catalyses (R)-pantothenate + ATP = (R)-4'-phosphopantothenate + ADP + H(+). Its pathway is cofactor biosynthesis; coenzyme A biosynthesis; CoA from (R)-pantothenate: step 1/5. Functionally, catalyzes the phosphorylation of pantothenate (Pan), the first step in CoA biosynthesis. The polypeptide is Type III pantothenate kinase (Nocardia farcinica (strain IFM 10152)).